A 619-amino-acid polypeptide reads, in one-letter code: Dihydroxy-acid dehydratase (619 aa).

D81 is a Mg(2+) binding site. Residue C122 coordinates [2Fe-2S] cluster. The Mg(2+) site is built by D123 and K124. K124 is subject to N6-carboxylysine. C195 lines the [2Fe-2S] cluster pocket. E494 serves as a coordination point for Mg(2+). Catalysis depends on S520, which acts as the Proton acceptor.

Belongs to the IlvD/Edd family. As to quaternary structure, homodimer. It depends on [2Fe-2S] cluster as a cofactor. Mg(2+) serves as cofactor.

It carries out the reaction (2R)-2,3-dihydroxy-3-methylbutanoate = 3-methyl-2-oxobutanoate + H2O. The catalysed reaction is (2R,3R)-2,3-dihydroxy-3-methylpentanoate = (S)-3-methyl-2-oxopentanoate + H2O. The protein operates within amino-acid biosynthesis; L-isoleucine biosynthesis; L-isoleucine from 2-oxobutanoate: step 3/4. It participates in amino-acid biosynthesis; L-valine biosynthesis; L-valine from pyruvate: step 3/4. Functionally, functions in the biosynthesis of branched-chain amino acids. Catalyzes the dehydration of (2R,3R)-2,3-dihydroxy-3-methylpentanoate (2,3-dihydroxy-3-methylvalerate) into 2-oxo-3-methylpentanoate (2-oxo-3-methylvalerate) and of (2R)-2,3-dihydroxy-3-methylbutanoate (2,3-dihydroxyisovalerate) into 2-oxo-3-methylbutanoate (2-oxoisovalerate), the penultimate precursor to L-isoleucine and L-valine, respectively. The chain is Dihydroxy-acid dehydratase from Shewanella frigidimarina (strain NCIMB 400).